Consider the following 71-residue polypeptide: Phosphatidylinositol N-acetylglucosaminyltransferase subunit Y (71 aa).

The Cytoplasmic segment spans residues 1–3 (MFL). Residues 4–26 (SLPTLTVLIPLVSLAGLFYSASV) traverse the membrane as a helical segment. Topologically, residues 27-44 (EENFPQGCTSTASLCFYS) are lumenal. A helical membrane pass occupies residues 45–65 (LLLPITIPVYVFFHLWTWMGI). Over 66 to 71 (KLFRHN) the chain is Cytoplasmic.

As to quaternary structure, component of the glycosylphosphatidylinositol-N-acetylglucosaminyltransferase (GPI-GnT) complex composed at least by PIGA, PIGC, PIGH, PIGP, PIGQ, PIGY and DPM2. Interacts directly with PIGA; this interaction regulates glycosylphosphatidylinositol-N-acetylglucosaminyltransferase activity. Does not interact with Ras proteins.

The protein resides in the endoplasmic reticulum membrane. It participates in glycolipid biosynthesis; glycosylphosphatidylinositol-anchor biosynthesis. In terms of biological role, part of the glycosylphosphatidylinositol-N-acetylglucosaminyltransferase (GPI-GnT) complex that catalyzes the transfer of N-acetylglucosamine from UDP-N-acetylglucosamine to phosphatidylinositol and participates in the first step of GPI biosynthesis. May act by regulating the catalytic subunit PIGA. This is Phosphatidylinositol N-acetylglucosaminyltransferase subunit Y from Homo sapiens (Human).